Consider the following 401-residue polypeptide: S-adenosylmethionine synthase (401 aa).

Position 136–141 (136–141 (GTGSSD)) interacts with ATP. Residues 278-305 (GDDGSVGRGNRSNGLITPSRPMSMEATS) are disordered.

Belongs to the AdoMet synthase 2 family. Requires Mg(2+) as cofactor.

It carries out the reaction L-methionine + ATP + H2O = S-adenosyl-L-methionine + phosphate + diphosphate. Its pathway is amino-acid biosynthesis; S-adenosyl-L-methionine biosynthesis; S-adenosyl-L-methionine from L-methionine: step 1/1. Catalyzes the formation of S-adenosylmethionine from methionine and ATP. The protein is S-adenosylmethionine synthase of Methanococcoides burtonii (strain DSM 6242 / NBRC 107633 / OCM 468 / ACE-M).